Reading from the N-terminus, the 143-residue chain is 3-dehydroquinate dehydratase (143 aa).

Catalysis depends on Tyr22, which acts as the Proton acceptor. Substrate contacts are provided by Asn73, His79, and Asp86. His99 acts as the Proton donor in catalysis. Substrate is bound by residues 100–101 (LS) and Arg110.

This sequence belongs to the type-II 3-dehydroquinase family. Homododecamer.

It carries out the reaction 3-dehydroquinate = 3-dehydroshikimate + H2O. It functions in the pathway metabolic intermediate biosynthesis; chorismate biosynthesis; chorismate from D-erythrose 4-phosphate and phosphoenolpyruvate: step 3/7. Its function is as follows. Catalyzes a trans-dehydration via an enolate intermediate. The sequence is that of 3-dehydroquinate dehydratase from Salinispora tropica (strain ATCC BAA-916 / DSM 44818 / JCM 13857 / NBRC 105044 / CNB-440).